The primary structure comprises 163 residues: Allophycocyanin alpha-B chain (163 aa).

Asparagine 71 carries the post-translational modification N4-methylasparagine. A (2R,3E)-phycocyanobilin-binding site is contributed by cysteine 81.

Belongs to the phycobiliprotein family. Post-translationally, contains one covalently linked bilin chromophore.

The protein localises to the plastid. Its subcellular location is the chloroplast thylakoid membrane. Functionally, allophycocyanin is a photosynthetic bile pigment-protein complex with maximum absorption at approximately 650 nanometers. The protein is Allophycocyanin alpha-B chain (apcD) of Cyanidium caldarium (Red alga).